A 237-amino-acid chain; its full sequence is 1-(5-phosphoribosyl)-5-[(5-phosphoribosylamino)methylideneamino] imidazole-4-carboxamide isomerase (237 aa).

Aspartate 8 functions as the Proton acceptor in the catalytic mechanism. Aspartate 130 serves as the catalytic Proton donor.

The protein belongs to the HisA/HisF family.

It localises to the cytoplasm. The catalysed reaction is 1-(5-phospho-beta-D-ribosyl)-5-[(5-phospho-beta-D-ribosylamino)methylideneamino]imidazole-4-carboxamide = 5-[(5-phospho-1-deoxy-D-ribulos-1-ylimino)methylamino]-1-(5-phospho-beta-D-ribosyl)imidazole-4-carboxamide. It functions in the pathway amino-acid biosynthesis; L-histidine biosynthesis; L-histidine from 5-phospho-alpha-D-ribose 1-diphosphate: step 4/9. The chain is 1-(5-phosphoribosyl)-5-[(5-phosphoribosylamino)methylideneamino] imidazole-4-carboxamide isomerase from Caldicellulosiruptor saccharolyticus (strain ATCC 43494 / DSM 8903 / Tp8T 6331).